A 669-amino-acid chain; its full sequence is Serine/threonine-protein kinase hippo (669 aa).

Residues Ser30 and Ser33 each carry the phosphoserine modification. The Protein kinase domain maps to 42–293 (FDIMYKLGEG…ATELLEHEFI (252 aa)). ATP is bound by residues 48–56 (LGEGSYGSV) and Lys71. Asp161 functions as the Proton acceptor in the catalytic mechanism. At Thr195 the chain carries Phosphothreonine; by Tao. Positions 432-445 (MVINSDSDDSTTAK) are enriched in polar residues. Residues 432-508 (MVINSDSDDS…QQQQQDEQHL (77 aa)) form a disordered region. Positions 460–479 (FLEHFDRKNAGDGRGDEKPI) are enriched in basic and acidic residues. Low complexity predominate over residues 490–503 (QQQQQQQQQQQQQQ). An SARAH domain is found at 608-655 (FEFLKFLTFDDLNQRLCNIDHEMELEIEQLNKKYNAKRQPIVDAMNAK).

The protein belongs to the protein kinase superfamily. STE Ser/Thr protein kinase family. STE20 subfamily. Homodimer. Interacts with Sav and Wts. Interacts (via SARAH domain) with Ex. Interacts with Kibra. In terms of processing, autophosphorylated. As to expression, expressed in CNS during embryogenesis. In third instar larvae, it is expressed throughout all imaginal disks.

Its subcellular location is the apical cell membrane. The protein localises to the cytoplasm. It carries out the reaction L-seryl-[protein] + ATP = O-phospho-L-seryl-[protein] + ADP + H(+). It catalyses the reaction L-threonyl-[protein] + ATP = O-phospho-L-threonyl-[protein] + ADP + H(+). In terms of biological role, plays a key role in the Hippo/SWH (Sav/Wts/Hpo) signaling pathway, a signaling pathway that plays a pivotal role in organ size control and tumor suppression by restricting proliferation and promoting apoptosis. The core of this pathway is composed of a kinase cascade wherein Hippo (Hpo), in complex with its regulatory protein Salvador (Sav), phosphorylates and activates Warts (Wts) in complex with its regulatory protein Mats, which in turn phosphorylates and inactivates the Yorkie (Yki) oncoprotein. The Hippo/SWH signaling pathway inhibits the activity of the transcriptional complex formed by Scalloped (sd) and Yki and the target genes of this pathway include cyclin-E (cycE), diap1 and bantam. Phosphorylates Sav, Wts and Th/DIAP1. Regulates the level of Th/DIAP1 apoptosis inhibitor. This is Serine/threonine-protein kinase hippo (hpo) from Drosophila melanogaster (Fruit fly).